Here is a 213-residue protein sequence, read N- to C-terminus: Response regulator GacA (213 aa).

Residues 3 to 119 (RVLVVDDHDL…EMVQAIRLVF (117 aa)) enclose the Response regulatory domain. D54 is modified (4-aspartylphosphate). The region spanning 142–207 (SDSPFDALSE…ELTLLAVRHG (66 aa)) is the HTH luxR-type domain. Positions 166–185 (VQIISDKLCLSPKTVNTYRY) form a DNA-binding region, H-T-H motif.

Post-translationally, phosphorylated by GacS.

Functionally, member of the two-component regulatory system GacA/GacS which controls the expression of secondary metabolites and extracellular products. Acts (probably primarily) by activating expression of CsrA1 and CsrA2 antagonist small RNAs (sRNA) RsmX, RsmY and RsmZ which bind to and prevent translation repression by CsrA1 and CsrA2. Involved in the regulation of secondary metabolism and in the synthesis of the antifungal factors cyanide, 2,4-diacetylphloroglucinol and pyoluteorin. Involved in synthesis of the autoinducing signal (unrelated to N-acylhomoserine lactones, induces the Gac/Csr cascade). Exercises positive post-transcriptional control over the hcnABC and aprA genes; acts upstream of CsrA2 (rsmA). Controls expression of csrA1 (rsmE) and csrA2. This is Response regulator GacA from Pseudomonas protegens (strain DSM 19095 / LMG 27888 / CFBP 6595 / CHA0).